The chain runs to 2969 residues: Histone-lysine N-methyltransferase ASH1L (2969 aa).

Disordered stretches follow at residues 1 to 70 (MDPR…TDAQ) and 118 to 143 (HPRK…RDPS). Residues 21–31 (KSPSAISTGTL) are compositionally biased toward polar residues. Residue Ser-22 is modified to Phosphoserine. Composition is skewed to basic and acidic residues over residues 33-65 (SKRE…KDDG) and 127-143 (KMTD…RDPS). A Glycyl lysine isopeptide (Lys-Gly) (interchain with G-Cter in SUMO2) cross-link involves residue Lys-34. Lys-375 carries the post-translational modification N6-acetyllysine. Lys-425 participates in a covalent cross-link: Glycyl lysine isopeptide (Lys-Gly) (interchain with G-Cter in SUMO2). A compositionally biased stretch (polar residues) spans 501–511 (IQQDSFSSSEK). 7 disordered regions span residues 501–525 (IQQD…QPPV), 537–583 (ASDV…PNPL), 824–845 (YKPK…PPKR), 878–966 (KQGL…EMEP), 1100–1128 (SEIL…AGFV), 1151–1231 (MKKA…EHVS), and 1243–1281 (SLKE…QLRN). The segment covering 512 to 522 (GSYETSKHEKQ) has biased composition (basic and acidic residues). Polar residues predominate over residues 554–579 (NLPSPSPTVSVNPLTRSPPETSSQLA). Residues 887–897 (PKKRGRPKRQM) show a composition bias toward basic residues. The segment at residues 887–899 (PKKRGRPKRQMRS) is a DNA-binding region (a.T hook 1). The segment covering 920-932 (SKLESESDNHRSS) has biased composition (basic and acidic residues). Over residues 936–949 (FESEDQLQDPDDLD) the composition is skewed to acidic residues. Low complexity-rich tracts occupy residues 1100 to 1123 (SEIL…PVSS) and 1162 to 1175 (SPPT…SHLS). Phosphoserine is present on residues Ser-1162 and Ser-1170. The segment covering 1186–1211 (SPISESHSDETIPSDSGIGTDNNSTS) has biased composition (polar residues). N5-methylglutamine is present on Gln-1220. Composition is skewed to basic residues over residues 1246 to 1256 (EKHKHKCKRRN) and 1266 to 1277 (KRQKRKRKKKYP). The a.T hook 2 DNA-binding region spans 1347–1359 (KKKRGRPPKMREA). 3 disordered regions span residues 1489–1508 (HREH…GSSR), 1580–1711 (SESS…ASGD), and 1741–1761 (ASAP…TLGK). Polar residues-rich tracts occupy residues 1496 to 1508 (EQPQ…GSSR), 1580 to 1598 (SESS…SEPA), 1605 to 1622 (NLFT…PNSS), and 1650 to 1680 (LPSN…STNC). The span at 1741–1751 (ASAPPSSSPGR) shows a compositional bias: low complexity. A DNA-binding region (a.T hook 3) is located at residues 1847–1859 (KRRPGRPRKCPLQ). The tract at residues 1911–1991 (KKGLKRKGWL…PRPPKKKYQK (81 aa)) is disordered. Positions 2069–2288 (PDVPLYKKIR…KCRGIIGGKS (220 aa)) are catalytic domain. The AWS domain maps to 2091-2142 (YEATTCNCKKPDDDTRKGCVDDCLNRMIFAECSPNTCPCGEQCCNQRIQRHE). An SET domain is found at 2145 to 2261 (QCLERFRAEE…AGTELTYDYN (117 aa)). The 17-residue stretch at 2269 to 2285 (KQQLCKCGFEKCRGIIG) folds into the Post-SET domain. The segment at 2288–2346 (SQRVNGLTSSKNSQPMATHKKSGRSKEKRKSKHKLKKRRGHLSEEPSENINTPTRLTPQ) is disordered. A compositionally biased stretch (polar residues) spans 2289 to 2303 (QRVNGLTSSKNSQPM). Positions 2305–2327 (THKKSGRSKEKRKSKHKLKKRRG) are enriched in basic residues. 3 positions are modified to N6-acetyllysine: Lys-2317, Lys-2319, and Lys-2323. Residues 2335-2346 (ENINTPTRLTPQ) show a composition bias toward polar residues. The Bromo domain occupies 2444-2550 (RLAQIFKEIC…KAYYNARHEA (107 aa)). The PHD-type zinc-finger motif lies at 2585 to 2631 (VIRCICGLYKDEGLMIQCDKCMVWQHCDCMGVNSDVEHYLCEQCDPR). Residues 2661-2798 (LLLRQGDCVY…KSAHLFYKIH (138 aa)) enclose the BAH domain. Disordered stretches follow at residues 2825 to 2856 (SPHY…DLGQ) and 2876 to 2919 (NEIP…RRHN). The span at 2842–2855 (WKSERSKPPLKDLG) shows a compositional bias: basic and acidic residues.

This sequence belongs to the class V-like SAM-binding methyltransferase superfamily. Histone-lysine methyltransferase family. SET2 subfamily. In terms of processing, methylated at Gln-1220 by N6AMT1. Widely expressed, with highest level in brain, heart and kidney.

It is found in the nucleus. The protein resides in the cell junction. Its subcellular location is the tight junction. The protein localises to the chromosome. The catalysed reaction is L-lysyl(36)-[histone H3] + 3 S-adenosyl-L-methionine = N(6),N(6),N(6)-trimethyl-L-lysyl(36)-[histone H3] + 3 S-adenosyl-L-homocysteine + 3 H(+). It catalyses the reaction L-lysyl(9)-[histone H3] + S-adenosyl-L-methionine = N(6)-methyl-L-lysyl(9)-[histone H3] + S-adenosyl-L-homocysteine + H(+). Its function is as follows. Histone methyltransferase specifically trimethylating 'Lys-36' of histone H3 forming H3K36me3. Also monomethylates 'Lys-9' of histone H3 (H3K9me1) in vitro. The physiological significance of the H3K9me1 activity is unclear. This chain is Histone-lysine N-methyltransferase ASH1L (ASH1L), found in Homo sapiens (Human).